Here is a 369-residue protein sequence, read N- to C-terminus: 3-isopropylmalate dehydrogenase (369 aa).

Residues Arg98, Arg108, Arg136, and Asp227 each coordinate substrate. Residues Asp227, Asp251, and Asp255 each coordinate Mg(2+). 290-302 (GSAPDIAGKGIAN) is a binding site for NAD(+).

It belongs to the isocitrate and isopropylmalate dehydrogenases family. LeuB type 1 subfamily. As to quaternary structure, homodimer. The cofactor is Mg(2+). Mn(2+) serves as cofactor.

The protein resides in the cytoplasm. The catalysed reaction is (2R,3S)-3-isopropylmalate + NAD(+) = 4-methyl-2-oxopentanoate + CO2 + NADH. The protein operates within amino-acid biosynthesis; L-leucine biosynthesis; L-leucine from 3-methyl-2-oxobutanoate: step 3/4. In terms of biological role, catalyzes the oxidation of 3-carboxy-2-hydroxy-4-methylpentanoate (3-isopropylmalate) to 3-carboxy-4-methyl-2-oxopentanoate. The product decarboxylates to 4-methyl-2 oxopentanoate. This is 3-isopropylmalate dehydrogenase from Gluconobacter oxydans (strain 621H) (Gluconobacter suboxydans).